We begin with the raw amino-acid sequence, 210 residues long: MLTTMKKSSLVLALFAIAATALVTITYALTKDQIAYQQQQQLLSVLNQVVPKEQHDNELYKACILVKNNDALGSKQAMPIYLASLNGKHSGAAIEAIAPDGYSGNIKIIVGVDSDAIVTGVRVLSHQETPGLGDKIDIRITRWVDAFLGKTVESSEDKNWAVQKDGGQFDQFTGATITPRAVVKAVKRAVWFYKTHQEELLTLPLNCETK.

The chain crosses the membrane as a helical span at residues 9 to 29 (SLVLALFAIAATALVTITYAL). The residue at position 176 (Thr-176) is an FMN phosphoryl threonine.

This sequence belongs to the RnfG family. As to quaternary structure, the complex is composed of six subunits: RnfA, RnfB, RnfC, RnfD, RnfE and RnfG. FMN is required as a cofactor.

Its subcellular location is the cell inner membrane. In terms of biological role, part of a membrane-bound complex that couples electron transfer with translocation of ions across the membrane. The chain is Ion-translocating oxidoreductase complex subunit G from Aliivibrio fischeri (strain MJ11) (Vibrio fischeri).